Consider the following 280-residue polypeptide: UPF0276 protein NGO_1946 (280 aa).

This sequence belongs to the UPF0276 family.

This Neisseria gonorrhoeae (strain ATCC 700825 / FA 1090) protein is UPF0276 protein NGO_1946.